A 301-amino-acid polypeptide reads, in one-letter code: Glycine--tRNA ligase alpha subunit (301 aa).

This sequence belongs to the class-II aminoacyl-tRNA synthetase family. As to quaternary structure, tetramer of two alpha and two beta subunits.

The protein resides in the cytoplasm. The enzyme catalyses tRNA(Gly) + glycine + ATP = glycyl-tRNA(Gly) + AMP + diphosphate. In Shewanella oneidensis (strain ATCC 700550 / JCM 31522 / CIP 106686 / LMG 19005 / NCIMB 14063 / MR-1), this protein is Glycine--tRNA ligase alpha subunit.